A 218-amino-acid chain; its full sequence is Pyridoxine/pyridoxamine 5'-phosphate oxidase (218 aa).

Substrate is bound by residues 14 to 17 and lysine 72; that span reads RREY. FMN is bound by residues 67 to 72, 82 to 83, arginine 88, lysine 89, and glutamine 111; these read RIVLLK and YT. The substrate site is built by tyrosine 129, arginine 133, and serine 137. Residues 146-147 and tryptophan 191 each bind FMN; that span reads QS. 197–199 contacts substrate; sequence RLH. Residue arginine 201 coordinates FMN.

Belongs to the pyridoxamine 5'-phosphate oxidase family. Homodimer. The cofactor is FMN.

The catalysed reaction is pyridoxamine 5'-phosphate + O2 + H2O = pyridoxal 5'-phosphate + H2O2 + NH4(+). The enzyme catalyses pyridoxine 5'-phosphate + O2 = pyridoxal 5'-phosphate + H2O2. Its pathway is cofactor metabolism; pyridoxal 5'-phosphate salvage; pyridoxal 5'-phosphate from pyridoxamine 5'-phosphate: step 1/1. It functions in the pathway cofactor metabolism; pyridoxal 5'-phosphate salvage; pyridoxal 5'-phosphate from pyridoxine 5'-phosphate: step 1/1. Its function is as follows. Catalyzes the oxidation of either pyridoxine 5'-phosphate (PNP) or pyridoxamine 5'-phosphate (PMP) into pyridoxal 5'-phosphate (PLP). The protein is Pyridoxine/pyridoxamine 5'-phosphate oxidase of Escherichia coli O127:H6 (strain E2348/69 / EPEC).